A 124-amino-acid polypeptide reads, in one-letter code: Holo-[acyl-carrier-protein] synthase (124 aa).

Residues Asp-8 and Glu-57 each contribute to the Mg(2+) site.

The protein belongs to the P-Pant transferase superfamily. AcpS family. Mg(2+) is required as a cofactor.

The protein localises to the cytoplasm. It catalyses the reaction apo-[ACP] + CoA = holo-[ACP] + adenosine 3',5'-bisphosphate + H(+). Transfers the 4'-phosphopantetheine moiety from coenzyme A to a Ser of acyl-carrier-protein. The protein is Holo-[acyl-carrier-protein] synthase of Leptospira borgpetersenii serovar Hardjo-bovis (strain JB197).